The chain runs to 189 residues: Ribosome maturation factor RimM (189 aa).

Residues 1–16 (MAPSCPTRSRVWSSRT) are compositionally biased toward polar residues. The interval 1 to 21 (MAPSCPTRSRVWSSRTSPPPD) is disordered. The PRC barrel domain occupies 118–189 (ENEFYWSDLI…TVEVDWGEDY (72 aa)).

It belongs to the RimM family. Binds ribosomal protein uS19.

It is found in the cytoplasm. An accessory protein needed during the final step in the assembly of 30S ribosomal subunit, possibly for assembly of the head region. Essential for efficient processing of 16S rRNA. May be needed both before and after RbfA during the maturation of 16S rRNA. It has affinity for free ribosomal 30S subunits but not for 70S ribosomes. In Thiobacillus denitrificans (strain ATCC 25259 / T1), this protein is Ribosome maturation factor RimM.